Reading from the N-terminus, the 451-residue chain is tRNA-2-methylthio-N(6)-dimethylallyladenosine synthase (451 aa).

An MTTase N-terminal domain is found at 3-120 (LKLHIKTYGC…LPEMINHVRI (118 aa)). 6 residues coordinate [4Fe-4S] cluster: Cys12, Cys49, Cys83, Cys157, Cys161, and Cys164. Positions 143 to 375 (QAKGPTAFVS…QECIRKQAMK (233 aa)) constitute a Radical SAM core domain. Residues 378 to 441 (QAMKGTVQCI…SNSLRGELIS (64 aa)) enclose the TRAM domain.

The protein belongs to the methylthiotransferase family. MiaB subfamily. Monomer. [4Fe-4S] cluster is required as a cofactor.

The protein resides in the cytoplasm. The enzyme catalyses N(6)-dimethylallyladenosine(37) in tRNA + (sulfur carrier)-SH + AH2 + 2 S-adenosyl-L-methionine = 2-methylsulfanyl-N(6)-dimethylallyladenosine(37) in tRNA + (sulfur carrier)-H + 5'-deoxyadenosine + L-methionine + A + S-adenosyl-L-homocysteine + 2 H(+). Catalyzes the methylthiolation of N6-(dimethylallyl)adenosine (i(6)A), leading to the formation of 2-methylthio-N6-(dimethylallyl)adenosine (ms(2)i(6)A) at position 37 in tRNAs that read codons beginning with uridine. The chain is tRNA-2-methylthio-N(6)-dimethylallyladenosine synthase from Baumannia cicadellinicola subsp. Homalodisca coagulata.